The chain runs to 285 residues: E2F-associated phosphoprotein (285 aa).

N-acetylmethionine is present on Met-1. Residues 1–30 form a disordered region; sequence MNRLPDDYDPYAVEEPSDEEPALSSSEDEV. The segment covering 15 to 30 has biased composition (acidic residues); sequence EPSDEEPALSSSEDEV. Position 17 is a phosphoserine (Ser-17). Thr-37 bears the Phosphothreonine mark. A disordered region spans residues 48–96; the sequence is CLTGESESSSEDEFEKEMEAELNSTMKTMEDKLSSLGTGSSSGNGKVAT. Residues 55–67 show a composition bias toward acidic residues; the sequence is SSSEDEFEKEMEA. The span at 81–92 shows a compositional bias: low complexity; it reads SSLGTGSSSGNG. Ser-109 and Ser-111 each carry phosphoserine. The disordered stretch occupies residues 118-144; the sequence is VQVTKKKKKKQHKIPTNDELLYDPEKD. Over residues 121 to 130 the composition is skewed to basic residues; it reads TKKKKKKQHK.

In terms of assembly, interacts with E2F1. The C-terminal half binds the N-terminal of E2F1. Also interacts with E2F2 and E2F3, but not E2F4. As to expression, ubiquitously expressed. Highest levels in heart, placenta, skeletal muscle and pancreas. Lower levels in brain, lung and kidney. In the brain, expressed in all regions with high levels in the cerebellum and cerebral cortex. Expressed in COS1 and transformed skin fibroblasts.

The protein localises to the cytoplasm. Its subcellular location is the nucleus. In terms of biological role, may play an important role in the fine-tuning of both major E2F1 activities, the regulation of the cell-cycle and the induction of apoptosis. Promotes S-phase entry, and inhibits p14(ARP) expression. In Homo sapiens (Human), this protein is E2F-associated phosphoprotein (EAPP).